The following is a 96-amino-acid chain: Exopolysaccharide production repressor protein (96 aa).

The next 2 helical transmembrane spans lie at Phe6–Gly26 and Thr35–Trp55. A disordered region spans residues Leu64–Ser96.

Its subcellular location is the cell membrane. The protein operates within glycan metabolism; exopolysaccharide biosynthesis. In terms of biological role, inhibition of exopolysaccharide synthesis (EPS) and nodulation ability (NOD). This Sinorhizobium fredii (strain NBRC 101917 / NGR234) protein is Exopolysaccharide production repressor protein (exoX).